The sequence spans 180 residues: Large ribosomal subunit protein bL17 (180 aa).

The disordered stretch occupies residues 134–180 (AQAKAKKAAAMPTEESEAKPAEEGDVVGASEPDAKAPEEPPAEAPEN).

This sequence belongs to the bacterial ribosomal protein bL17 family. In terms of assembly, part of the 50S ribosomal subunit. Contacts protein L32.

In Mycobacterium tuberculosis (strain ATCC 25177 / H37Ra), this protein is Large ribosomal subunit protein bL17.